The sequence spans 232 residues: MHNWKGVWLCSLFLTFGQLWNGILLAYPLDCKDEQGSYTRCTSISLEKLLDRAIQHAELLYRVSEESCTIFEDNFAPFSLVSQRSRNFNSCYTKGLRLPSSKSEAQQVSDKWLLHSVLVLVQSWIEPFVYLQRTLDTYNSLPGSLVNKTKWVSDKLPSLEQGIVVLIRKMLHEGLITTDFQQSVIEIEPSPEITDSSARDYMILNCFRKDAHKMETFLKLLKCRQIKKLNCY.

A signal peptide spans 1–16; the sequence is MHNWKGVWLCSLFLTF. Disulfide bonds link Cys-31/Cys-41, Cys-91/Cys-206, and Cys-223/Cys-231. Asn-147 is a glycosylation site (N-linked (GlcNAc...) asparagine).

This sequence belongs to the somatotropin/prolactin family. Pituitary gland.

The protein localises to the secreted. The protein is Somatolactin of Protopterus annectens (African lungfish).